The following is a 380-amino-acid chain: 12-oxophytodienoate reductase 1 (380 aa).

Residues 35–37 (PLT), Ala68, and Gln110 contribute to the FMN site. Substrate is bound at residue 182–185 (HGAH). Tyr187 (proton donor) is an active-site residue. Arg234 provides a ligand contact to FMN. Arg275 is a substrate binding site. FMN-binding positions include Gly305 and 326-327 (GR).

It belongs to the NADH:flavin oxidoreductase/NADH oxidase family. FMN serves as cofactor.

The enzyme catalyses (1S,2S)-OPC-8 + NADP(+) = (9S,13S,15Z)-12-oxophyto-10,15-dienoate + NADPH + H(+). It participates in lipid metabolism; oxylipin biosynthesis. Functionally, probably involved in the biosynthesis or metabolism of oxylipin signaling molecules. In vitro, reduces cis(-)-12-oxophytodienoic acid (cis(-)-OPDA) and to cis(-)-OPC-8:0. The chain is 12-oxophytodienoate reductase 1 from Oryza sativa subsp. japonica (Rice).